The sequence spans 260 residues: Membrane protein insertase YidC 1 (260 aa).

The signal sequence occupies residues 1–22 (MLKSYRAVLVSLSLLFVFVLSG). Cysteine 23 carries N-palmitoyl cysteine lipidation. Cysteine 23 is lipidated: S-diacylglycerol cysteine. 5 consecutive transmembrane segments (helical) span residues 29–49 (IDAH…SFMI), 52–72 (VAHH…TLVI), 133–153 (LAGC…YYAI), 164–184 (FLWV…IAAL), and 213–233 (MPAM…LYWI).

The protein belongs to the OXA1/ALB3/YidC family. Type 2 subfamily.

The protein resides in the cell membrane. In terms of biological role, required for the insertion and/or proper folding and/or complex formation of integral membrane proteins into the membrane. Involved in integration of membrane proteins that insert both dependently and independently of the Sec translocase complex, as well as at least some lipoproteins. The polypeptide is Membrane protein insertase YidC 1 (Bacillus cereus (strain ATCC 14579 / DSM 31 / CCUG 7414 / JCM 2152 / NBRC 15305 / NCIMB 9373 / NCTC 2599 / NRRL B-3711)).